The sequence spans 201 residues: Holliday junction branch migration complex subunit RuvA (201 aa).

The interval Met1–Leu64 is domain I. The domain II stretch occupies residues Asp65–Thr143. A flexible linker region spans residues Ala144–Glu154. The tract at residues Glu154–Phe201 is domain III.

This sequence belongs to the RuvA family. In terms of assembly, homotetramer. Forms an RuvA(8)-RuvB(12)-Holliday junction (HJ) complex. HJ DNA is sandwiched between 2 RuvA tetramers; dsDNA enters through RuvA and exits via RuvB. An RuvB hexamer assembles on each DNA strand where it exits the tetramer. Each RuvB hexamer is contacted by two RuvA subunits (via domain III) on 2 adjacent RuvB subunits; this complex drives branch migration. In the full resolvosome a probable DNA-RuvA(4)-RuvB(12)-RuvC(2) complex forms which resolves the HJ.

It is found in the cytoplasm. Its function is as follows. The RuvA-RuvB-RuvC complex processes Holliday junction (HJ) DNA during genetic recombination and DNA repair, while the RuvA-RuvB complex plays an important role in the rescue of blocked DNA replication forks via replication fork reversal (RFR). RuvA specifically binds to HJ cruciform DNA, conferring on it an open structure. The RuvB hexamer acts as an ATP-dependent pump, pulling dsDNA into and through the RuvAB complex. HJ branch migration allows RuvC to scan DNA until it finds its consensus sequence, where it cleaves and resolves the cruciform DNA. The polypeptide is Holliday junction branch migration complex subunit RuvA (Chlorobaculum tepidum (strain ATCC 49652 / DSM 12025 / NBRC 103806 / TLS) (Chlorobium tepidum)).